A 590-amino-acid chain; its full sequence is L-asparaginase (590 aa).

The Asparaginase/glutaminase domain occupies 6–357; that stretch reads AHVLVLYTGG…VEKKAMMVKN (352 aa). Threonine 16 acts as the O-isoaspartyl threonine intermediate in catalysis. The asparaginase stretch occupies residues 44–351; sequence NDDDYVSTYY…KDCWELVEKK (308 aa). Substrate-binding positions include 85–87 and 117–118; these read DSS and TD. 4 ANK repeats span residues 398–427, 431–460, 497–526, and 530–559; these read IFPQ…DLSV, NGRN…SFHL, RLGV…DINQ, and NGET…DPYK.

The protein in the N-terminal section; belongs to the asparaginase 1 family. In terms of tissue distribution, may be present in the larval cuticle.

It carries out the reaction L-asparagine + H2O = L-aspartate + NH4(+). This is L-asparaginase from Dirofilaria immitis (Canine heartworm).